A 187-amino-acid chain; its full sequence is Ion-translocating oxidoreductase complex subunit B (187 aa).

The hydrophobic stretch occupies residues 1–26 (MTHILFAVLVLALLALAFGIILGFAA). The 4Fe-4S domain maps to 32–90 (EADPIVDQLDALLPQTQCGQCGYPGCKPYAEALANGDQINKCVPGGDATMRKIADLMGV). Residues Cys49, Cys52, Cys57, Cys73, Cys115, Cys118, Cys121, Cys125, Cys145, Cys148, Cys151, and Cys155 each coordinate [4Fe-4S] cluster. 2 consecutive 4Fe-4S ferredoxin-type domains span residues 106 to 135 (KVAFIHEDQCIGCTKCIQACPVDAIVGATK) and 136 to 165 (AMHTVITDECTGCDLCVDPCPTDCIEMIPV).

Belongs to the 4Fe4S bacterial-type ferredoxin family. RnfB subfamily. In terms of assembly, the complex is composed of six subunits: RnfA, RnfB, RnfC, RnfD, RnfE and RnfG. It depends on [4Fe-4S] cluster as a cofactor.

The protein resides in the cell inner membrane. Part of a membrane-bound complex that couples electron transfer with translocation of ions across the membrane. The chain is Ion-translocating oxidoreductase complex subunit B from Aeromonas salmonicida (strain A449).